We begin with the raw amino-acid sequence, 334 residues long: F-box protein AUF1 (334 aa).

The F-box domain maps to 1–49; it reads MDAFDAIPDPVVIDILNRVGDVKTLIRCRSVSKRFNSLATQSESLLLQL.

Part of a SCF (ASK-cullin-F-box) protein ligase complex. Interacts with SKP1A/ASK1, SKP1B/ASK2, ASK11 and ASK13.

Its subcellular location is the nucleus. Its pathway is protein modification; protein ubiquitination. In terms of biological role, component of SCF(ASK-cullin-F-box) E3 ubiquitin ligase complexes, which may mediate the ubiquitination and subsequent proteasomal degradation of target proteins. Involved in the control of basipetal and acropetal auxin transport by promoting the distribution and expression of the auxin transporter PIN2. Promotes cytokinin-mediated cell expansion in the root elongation and differentiation zone, without affecting root cell division. The sequence is that of F-box protein AUF1 from Arabidopsis thaliana (Mouse-ear cress).